Consider the following 338-residue polypeptide: Phosphatidylinositol:ceramide inositolphosphotransferase (338 aa).

The Cytoplasmic portion of the chain corresponds to 1–36 (MTSHVTAHDVGGNEDIGTDHVPWYKQPLPLCTQVMR). A helical membrane pass occupies residues 37–57 (FILLLLLTVMFLGVAILVANA). Over 58–87 (RMPDPEKVRPLPDLLLESIPKVALLENGTN) the chain is Extracellular. A helical transmembrane segment spans residues 88–108 (VIIFLLNATTVVVGFKVFLLE). Residues 109 to 116 (RHMNGLPR) lie on the Cytoplasmic side of the membrane. A helical membrane pass occupies residues 117–137 (VTFLVGVPKIGSFLNRMAFGV). Topologically, residues 138 to 152 (LDSGRRPFPLKNVFP) are extracellular. Residues 153–173 (IMAIRFLTSYAVVMVFRAFVI) traverse the membrane as a helical segment. Residues 174-189 (MGTSYPATDNHCQNPQ) are Cytoplasmic-facing. The chain crosses the membrane as a helical span at residues 190–210 (VIEHPVLNVILTLVTLGSGAI). Residues 211–222 (HCGDLMFSGHTM) lie on the Extracellular side of the membrane. Residue His220 is part of the active site. The chain crosses the membrane as a helical span at residues 223–243 (ILSLAFILAWDYSPFLHPWAV). Over 244–338 (RVWVSVLLPI…TDASAALPEH (95 aa)) the chain is Cytoplasmic. Active-site residues include His264 and Asp268.

This sequence belongs to the sphingomyelin synthase family.

The protein resides in the membrane. Its function is as follows. Bidirectional lipid inositolphosphotransferase capable of converting phosphatidylinositol (PI) and ceramide to inositol-phosphorylceramide (IPC) and diacylglycerol (DAG) and vice versa. Direction is dependent on the relative concentrations of DAG and ceramide as phosphoinositol acceptors. Essential for viability of the pathogenic bloodstream stage of this human protozoan parasite and, consequently, can be considered as potential drug target. The chain is Phosphatidylinositol:ceramide inositolphosphotransferase from Leishmania major.